Reading from the N-terminus, the 1368-residue chain is MTSSSKPARKTSKSKSKASKAAEAPAAPSNELSREAPTFQNKVIDKKALRSLVAWSYKHHGTAATSALADDLKDLGFRFATQAAVSISVDDLRVPGDKSTLLQEAEDQITATEERYRLGEITEVERHTKVIDTWTETNERLVQSVRRNFDENDPLNSVWMMANSGARGNMSQVRQLVGMRGLMANPQGEIIDLPIRTNFREGLTVTEYVISSYGARKGLVDTALRTADSGYLTRRLVDVAQDVIVREDDCGTTRSIKVAADDNGKYKSRLVGRLLAEDVVDGAGEVIATRNTEVDPPLSARIEAAGIAQVQVRSPLTCEAARSVCRKCYGWALAHNELVDLGEAVGIIAAQSIGEPGTQLTMRTFHTGGVSTAETGVVRSVVEGSVEFSAKAKVRPHRTPHGVEAQLAETDFSLTVKPSGKGKTQKLDVTAGSILFVNAGGSVPNDTILAQISSGSAVKKSVEKATKDVVCDLAGQVRYEDVIQPKEVPDRQGNITLKAQRLGRLWVFSGDVYNLPPNAMPVVQGGANVKTGEVLAESRQVSEFGGAVRLRESQGDSREVEIVTSSLTLKDCKLVATTTHSGQIWHLESKDNTRYRLNTEPGTKIANGEVIAELADDRFRTQTGGLVKFAPGLAIKKARSAKNGFEVSKGGTLLWIPQETHEINKDISLLMIEDGQWIEAGTEVVKDIFSQTAGIVTVTQKNDILREIIVRSGQLHLVSDSKVLARYTDGGGKMVNPGEEIAPGLKAEAMHMVEAVDTPEGGALLLRPVEEYAIPNEAHMPELGSVKQANGPSMGLKAVQRLAFKDGELVKSVEGVELLRTQLLLETFDTTPQMTVDVESAQDKRAKTIQRLQLTILETHLVRRDTLSDASHGSTHTEVKVADGDNIKRGDVVATVQILCKDDGVAQLPDRKDDEPIRRLIVERPSDTITVDLGGSKLSLKAGQRVVEGDDLGGGLTCPHSGQVEEVKGSSLTLRVGRPYMVSPDSILHVRDGDLVLRGDTLAQLVFERAKTGDIVQGLPRIEELLEARRPRESAVLCRKAGTIKVEQPEGEDNPTVSVNEGEELHTEYPILLGRTVMVSDGQEVKAGDLLTDGPINPHELLEVIFEDLRGPLPTMDAANQAIGRLQTALVQEVQNVYKSQGVTIDDKHLEVIVRQMTSKVRIEDAGDTTLLPGELIELRQVDQVNQAMAITGGAPAEFTPVLLGITKASLNTDSFISAASFQETTRVLTEAAIEGKSDWLRGLKENVIIGRLIPAGTGFSGFDEQLKAEALPHPDILGEENAGYRRATNLRPDYTVEMPLPQSNTAVLDDPSDTELEATRSRHGIEDRTNLAAFARPAAGEELAEEHVPDPGALEGLQEEGLLSQDS.

The segment at 1–38 is disordered; the sequence is MTSSSKPARKTSKSKSKASKAAEAPAAPSNELSREAPT. Residues 7–18 are compositionally biased toward basic residues; sequence PARKTSKSKSKA. Residues 19 to 29 are compositionally biased toward low complexity; the sequence is SKAAEAPAAPS. Zn(2+) contacts are provided by cysteine 250, cysteine 318, cysteine 325, and cysteine 328. Residues 1340 to 1368 are disordered; that stretch reads AGEELAEEHVPDPGALEGLQEEGLLSQDS. A compositionally biased stretch (low complexity) spans 1353–1368; it reads GALEGLQEEGLLSQDS.

This sequence belongs to the RNA polymerase beta' chain family. RpoC2 subfamily. In cyanobacteria the RNAP catalytic core is composed of 2 alpha, 1 beta, 1 beta', 1 gamma and 1 omega subunit. When a sigma factor is associated with the core the holoenzyme is formed, which can initiate transcription. It depends on Zn(2+) as a cofactor.

It catalyses the reaction RNA(n) + a ribonucleoside 5'-triphosphate = RNA(n+1) + diphosphate. DNA-dependent RNA polymerase catalyzes the transcription of DNA into RNA using the four ribonucleoside triphosphates as substrates. In Synechococcus sp. (strain RCC307), this protein is DNA-directed RNA polymerase subunit beta'.